We begin with the raw amino-acid sequence, 267 residues long: 5'-nucleotidase SurE (267 aa).

A divalent metal cation is bound by residues aspartate 14, aspartate 15, serine 45, and asparagine 100.

It belongs to the SurE nucleotidase family. A divalent metal cation serves as cofactor.

It localises to the cytoplasm. The enzyme catalyses a ribonucleoside 5'-phosphate + H2O = a ribonucleoside + phosphate. Functionally, nucleotidase that shows phosphatase activity on nucleoside 5'-monophosphates. The protein is 5'-nucleotidase SurE of Methanosarcina barkeri (strain Fusaro / DSM 804).